Reading from the N-terminus, the 213-residue chain is Octanoyltransferase (213 aa).

A BPL/LPL catalytic domain is found at 32–207 (ENSHDEIWLV…NILALLNNPP (176 aa)). Substrate-binding positions include 71–78 (RGGQVTYH), 138–140 (SLG), and 151–153 (GLA). The active-site Acyl-thioester intermediate is cysteine 169.

Belongs to the LipB family.

The protein localises to the cytoplasm. It catalyses the reaction octanoyl-[ACP] + L-lysyl-[protein] = N(6)-octanoyl-L-lysyl-[protein] + holo-[ACP] + H(+). It participates in protein modification; protein lipoylation via endogenous pathway; protein N(6)-(lipoyl)lysine from octanoyl-[acyl-carrier-protein]: step 1/2. Catalyzes the transfer of endogenously produced octanoic acid from octanoyl-acyl-carrier-protein onto the lipoyl domains of lipoate-dependent enzymes. Lipoyl-ACP can also act as a substrate although octanoyl-ACP is likely to be the physiological substrate. This chain is Octanoyltransferase, found in Salmonella typhi.